We begin with the raw amino-acid sequence, 374 residues long: MSKKDYYKLLGVDRNASTDEIKKAYKKLALKYHPDRNPGNKEAEEKFKEITAAYEVLSDSEKRAGYDRYGHEGASGGFDFSQGFGSAGDFSDIFNDFFGGEFGSSSRSKAKRSTTGVPGADLRYDLEITLEDAFKGIQAPIHYVTNVKCDMCQGRGSEGATKPVQCHTCQGSGRIRTQQGFFTIERTCTTCYGEGEIIQNKCKKCNGSGRRRDEVNISVSIPKGIEEGAKVRVSGKGEAGAKGGKSGDLYVYVKITPHKIFTRNKADLHCKVPIRMTLAVLGGEIDVQSIDGAKIKVKVPEGTQTSTKLRCKEKGMPYMNSYARGDLYVQIIVETLNPNNLTKKQIELLKALEEEENASIQQQSEGFFSKVKKK.

One can recognise a J domain in the interval 5–70 (DYYKLLGVDR…EKRAGYDRYG (66 aa)). Residues 136–214 (GIQAPIHYVT…CNGSGRRRDE (79 aa)) form a CR-type zinc finger. The Zn(2+) site is built by cysteine 149, cysteine 152, cysteine 166, cysteine 169, cysteine 188, cysteine 191, cysteine 202, and cysteine 205. CXXCXGXG motif repeat units follow at residues 149-156 (CDMCQGRG), 166-173 (CHTCQGSG), 188-195 (CTTCYGEG), and 202-209 (CKKCNGSG).

The protein belongs to the DnaJ family. Homodimer. Zn(2+) serves as cofactor.

It localises to the cytoplasm. Participates actively in the response to hyperosmotic and heat shock by preventing the aggregation of stress-denatured proteins and by disaggregating proteins, also in an autonomous, DnaK-independent fashion. Unfolded proteins bind initially to DnaJ; upon interaction with the DnaJ-bound protein, DnaK hydrolyzes its bound ATP, resulting in the formation of a stable complex. GrpE releases ADP from DnaK; ATP binding to DnaK triggers the release of the substrate protein, thus completing the reaction cycle. Several rounds of ATP-dependent interactions between DnaJ, DnaK and GrpE are required for fully efficient folding. Also involved, together with DnaK and GrpE, in the DNA replication of plasmids through activation of initiation proteins. This chain is Chaperone protein DnaJ, found in Wolbachia sp. subsp. Brugia malayi (strain TRS).